A 223-amino-acid polypeptide reads, in one-letter code: Small ribosomal subunit protein uS3 (223 aa).

The region spanning 39–117 (IREHLRKKPS…RPELNAKLVA (79 aa)) is the KH type-2 domain.

This sequence belongs to the universal ribosomal protein uS3 family. Part of the 30S ribosomal subunit. Forms a tight complex with proteins S10 and S14.

In terms of biological role, binds the lower part of the 30S subunit head. Binds mRNA in the 70S ribosome, positioning it for translation. The polypeptide is Small ribosomal subunit protein uS3 (Chlamydia caviae (strain ATCC VR-813 / DSM 19441 / 03DC25 / GPIC) (Chlamydophila caviae)).